The sequence spans 259 residues: Chymotrypsin-1 (259 aa).

The first 17 residues, 1-17 (MLRKVFAVVSVLLVVSA), serve as a signal peptide directing secretion. Residues 18-32 (AKVTKLVLDDNYVNR) constitute a propeptide, activation peptide. The Peptidase S1 domain occupies 33-255 (VVGGEVAKNG…YHDWVRTTMA (223 aa)). C59 and C75 are oxidised to a cystine. Active-site charge relay system residues include H74 and D119. 2 cysteine pairs are disulfide-bonded: C182-C198 and C208-C232. S212 serves as the catalytic Charge relay system.

This sequence belongs to the peptidase S1 family. As to expression, after blood feeding, expression is induced in the midgut epithelium, followed by secretion into the midgut lumen.

It localises to the secreted. It carries out the reaction Preferential cleavage: Tyr-|-Xaa, Trp-|-Xaa, Phe-|-Xaa, Leu-|-Xaa.. This Anopheles gambiae (African malaria mosquito) protein is Chymotrypsin-1 (CHYM1).